Here is a 203-residue protein sequence, read N- to C-terminus: Cytochrome c biogenesis ATP-binding export protein CcmA (203 aa).

Residues 2-203 form the ABC transporter domain; it reads LEALDLAGVR…KTSQTVRMGA (202 aa). Residue 34–41 participates in ATP binding; that stretch reads GENGSGKT.

This sequence belongs to the ABC transporter superfamily. CcmA exporter (TC 3.A.1.107) family. As to quaternary structure, the complex is composed of two ATP-binding proteins (CcmA) and two transmembrane proteins (CcmB).

Its subcellular location is the cell inner membrane. It catalyses the reaction heme b(in) + ATP + H2O = heme b(out) + ADP + phosphate + H(+). Functionally, part of the ABC transporter complex CcmAB involved in the biogenesis of c-type cytochromes; once thought to export heme, this seems not to be the case, but its exact role is uncertain. Responsible for energy coupling to the transport system. The protein is Cytochrome c biogenesis ATP-binding export protein CcmA of Pseudomonas aeruginosa.